The following is a 401-amino-acid chain: Argininosuccinate synthase (401 aa).

ATP is bound by residues 10 to 18 and Ala37; that span reads AYSGGLDTS. An L-citrulline-binding site is contributed by Tyr89. Residue Gly119 coordinates ATP. 3 residues coordinate L-aspartate: Thr121, Asn125, and Asp126. Asn125 is an L-citrulline binding site. Arg129, Ser178, Ser187, Glu263, and Tyr275 together coordinate L-citrulline.

Belongs to the argininosuccinate synthase family. Type 1 subfamily. In terms of assembly, homotetramer.

The protein localises to the cytoplasm. The catalysed reaction is L-citrulline + L-aspartate + ATP = 2-(N(omega)-L-arginino)succinate + AMP + diphosphate + H(+). It functions in the pathway amino-acid biosynthesis; L-arginine biosynthesis; L-arginine from L-ornithine and carbamoyl phosphate: step 2/3. In Buchnera aphidicola subsp. Schizaphis graminum (strain Sg), this protein is Argininosuccinate synthase.